The chain runs to 632 residues: tRNA uridine 5-carboxymethylaminomethyl modification enzyme MnmG (632 aa).

FAD contacts are provided by residues 15–20, Ile-127, and Ser-182; that span reads GAGHAG. Position 276–290 (276–290) interacts with NAD(+); it reads GPRYCPSIEDKIVRF. Gln-373 is an FAD binding site.

Belongs to the MnmG family. Homodimer. Heterotetramer of two MnmE and two MnmG subunits. Requires FAD as cofactor.

The protein localises to the cytoplasm. Its function is as follows. NAD-binding protein involved in the addition of a carboxymethylaminomethyl (cmnm) group at the wobble position (U34) of certain tRNAs, forming tRNA-cmnm(5)s(2)U34. This is tRNA uridine 5-carboxymethylaminomethyl modification enzyme MnmG from Streptococcus pyogenes serotype M1.